A 62-amino-acid chain; its full sequence is Photosystem II reaction center protein Z (62 aa).

2 helical membrane-spanning segments follow: residues 8–28 and 41–61; these read AVFALIAISFLLVIGVPVVLA and FSGASLWIGLVFLVGILNSFI.

This sequence belongs to the PsbZ family. As to quaternary structure, PSII is composed of 1 copy each of membrane proteins PsbA, PsbB, PsbC, PsbD, PsbE, PsbF, PsbH, PsbI, PsbJ, PsbK, PsbL, PsbM, PsbT, PsbY, PsbZ, Psb30/Ycf12, at least 3 peripheral proteins of the oxygen-evolving complex and a large number of cofactors. It forms dimeric complexes.

Its subcellular location is the plastid. The protein resides in the chloroplast thylakoid membrane. Functionally, may control the interaction of photosystem II (PSII) cores with the light-harvesting antenna, regulates electron flow through the 2 photosystem reaction centers. PSII is a light-driven water plastoquinone oxidoreductase, using light energy to abstract electrons from H(2)O, generating a proton gradient subsequently used for ATP formation. The sequence is that of Photosystem II reaction center protein Z from Marchantia polymorpha (Common liverwort).